The primary structure comprises 1737 residues: MKHLEGDIVWVPHTVNGYCRGKIIGYNEKNQVTVRLLELNEEIKINEQLIQNYNQSDDKDFSDMVEIQDLSEAIILNNLGLRYKSDQIYTYIGNVLISINPYKEIKDIYSLNILNKYKDINTIKSNPPHIYAVALRAYQSMVSEKKNQSIIISGESGSGKTEASKTILQYLINTSNSNSNNNTNINNNNNSIEKDILNSNPILEAFGNSRTTKNHNSSRFGKFLKIEFRSSDMKIDGASIETYLLEKSRISHRPDVNNLSYHIFYYLVMGASKEERERLGLDNDPSKYRYLDASTSVIESFKKQSNGGSGGGSGNNDLSESLQLVKQSLESMSIAKEQCDDIFLTLAAILHLGNIEFEVDQTENEQTSGFSKISEQKASVKKSLSMVSKLLGYPEQVFKQTLLNRNLKGGGRGSVYCRPMEVYQSEQTRDALSKALYVRLFASIVEKINVKFIQNTGSKDLQGGYSSKRNNLFIGVLDIFGFENLSSNSLDQLLINFTNEKLQQQFNLNVFENEQKDYLQEGIPWSTSNFIDNKECIELFEKKSYGLLSLLDDECMMPKGSEVTLLEKYNKQYHNTNQYYQRTLAKGTLGIKHFAGDVTYQTDGWLEKNRDSIPTEVEQLLSASSNNLIKSLFNLKELNKSNDNNSNNNNSNNNSSSSSSSQSTASITAKASPPRERFNSGSGSGTTSPLNLSGSSSPLSGSGSYSIIGGNSNSNSNNNNSSNNKKSQSVSVAGQFIEQLNKLISTINSTSVHYIRCIKPNVTMDCNNFNNSHVLSQLRNVGVLNTVKVRKMGYSYRRDFIQFYSRYNCILNSLNIKINLTNINHSNLCKEILENVNSQYKNNNNNKNNNNQIVKITTNSKPTFQIGKTKIFISDELYIYLEKKRYDSLVDSVLKIQAFFKMIKIRNQYKRNKESSLFLQTLIRAQRAKKDFEQLVILENKRKEEERKKELERQRKEEEERQKELERQRREEEKELERKRKEEERELERQRKEEEKEQERKRKEEEKEQERKKKEEKEIEKKRKEEEKKKKKNEQNLSLPSLDITNSPSLINTTTTTTTTTTTTTNTSSPPLSPPISPRPSTPSSTSSSSSTTSSPSTKKQLLFKFNSISNLLSKSLHGSSHSDKNSKEDNNSNNNNNGDSTIILSSDSSFGQPTPKATSTPTPPPPPPLKTQPVPISSGVENNSSPNLWSHRNSPNFNGLVREKSRARIGRLTIRSASPLDLTYLPDPSKNEGSPQFTSQSLDFTPNIPPIITNSIVEQQSSLSGINKPIPQRTISSSENSPLSRANSSISSSLLILTPTLTSLSTSTTPSTPTTPKTPTTLSSSSVSTSTSLSSVSSSVSSSSSSSIPTPIIESTPSNSNEDLITTLSSPISTGHTGESIEEKNKRFRIKIINELIETERDYVRDLNIVVEVFLNPIREKQLLSAKDINSLFSNIEILFSINMNVLKALEKDKDPLCENISVGQTFLDMSHYLKMYTTYCSNQQNALKILEEEKIKNQPFREYLEFCMNDSVCRGLPLNSFIIKPVQRICKYPLLIKETIKFTPNDHPDKPALEEVDKKISDIVQSINEAKRTLELFQKIVDLQNSIDGLEDTNLMEQGRTLLMEGTVSAVKELNSEDSLSRTLFLFNNLILICSFGTNVLSTAINQFKTKKLKLKAKIPISDSRLIFVSDTDSVKYALEIVNIKEDSNYILCFNNDQDRSKWFKQIKALIQEQKLSNAKKAATIGNSRLIQTTS.

In terms of domain architecture, Myosin N-terminal SH3-like spans 4–55 (LEGDIVWVPHTVNGYCRGKIIGYNEKNQVTVRLLELNEEIKINEQLIQNYNQ). Positions 59–886 (KDFSDMVEIQ…LYIYLEKKRY (828 aa)) constitute a Myosin motor domain. ATP is bound at residue 154 to 161 (GESGSGKT). Residues 640–727 (KSNDNNSNNN…NNNSSNNKKS (88 aa)) form a disordered region. Composition is skewed to low complexity over residues 641–663 (SNDNNSNNNNSNNNSSSSSSSQS) and 679–724 (NSGS…SSNN). Residues 754–761 (YIRCIKPN) are actin-binding. IQ domains lie at 889 to 918 (LVDSVLKIQAFFKMIKIRNQYKRNKESSLF) and 912 to 941 (NKESSLFLQTLIRAQRAKKDFEQLVILENK). Positions 926 to 1039 (QRAKKDFEQL…KKKNEQNLSL (114 aa)) form a coiled coil. A compositionally biased stretch (basic and acidic residues) spans 947–1028 (RKKELERQRK…IEKKRKEEEK (82 aa)). 4 disordered regions span residues 947-1099 (RKKE…PSTK), 1117-1199 (LHGS…PNFN), 1266-1290 (GINKPIPQRTISSSENSPLSRANSS), and 1304-1364 (SLST…SNED). Low complexity predominate over residues 1044-1070 (ITNSPSLINTTTTTTTTTTTTTNTSSP). The span at 1071–1081 (PLSPPISPRPS) shows a compositional bias: pro residues. Over residues 1082-1098 (TPSSTSSSSSTTSSPST) the composition is skewed to low complexity. The segment covering 1121 to 1131 (SHSDKNSKEDN) has biased composition (basic and acidic residues). Residues 1132–1141 (NSNNNNNGDS) are compositionally biased toward low complexity. Over residues 1143-1153 (IILSSDSSFGQ) the composition is skewed to polar residues. Over residues 1162-1171 (PTPPPPPPLK) the composition is skewed to pro residues. Composition is skewed to polar residues over residues 1180-1198 (GVENNSSPNLWSHRNSPNF) and 1274-1288 (RTISSSENSPLSRAN). Residues 1304-1359 (SLSTSTTPSTPTTPKTPTTLSSSSVSTSTSLSSVSSSVSSSSSSSIPTPIIESTPS) are compositionally biased toward low complexity. Residues 1389–1572 (FRIKIINELI…SDIVQSINEA (184 aa)) form the DH domain. Residues 1603-1714 (TLLMEGTVSA…WFKQIKALIQ (112 aa)) enclose the PH domain.

This sequence belongs to the TRAFAC class myosin-kinesin ATPase superfamily. Myosin family. As to quaternary structure, monomer.

The protein resides in the cytoplasm. In terms of biological role, myosins are actin-based motor molecules with ATPase activity. Involved in macropinocytosis and remodeling of actin cytoskeleton. This is Myosin-M heavy chain (myoM) from Dictyostelium discoideum (Social amoeba).